The primary structure comprises 418 residues: L-rhamnose isomerase (418 aa).

Residues His-262, Asp-294, and Asp-296 each contribute to the Mn(2+) site.

It belongs to the rhamnose isomerase family. Homotetramer. It depends on Mn(2+) as a cofactor.

It is found in the cytoplasm. The catalysed reaction is L-rhamnopyranose = L-rhamnulose. It participates in carbohydrate degradation; L-rhamnose degradation; glycerone phosphate from L-rhamnose: step 1/3. Functionally, catalyzes the interconversion of L-rhamnose and L-rhamnulose. This is L-rhamnose isomerase from Yersinia pseudotuberculosis serotype O:1b (strain IP 31758).